Here is a 452-residue protein sequence, read N- to C-terminus: Phosphoglucosamine mutase (452 aa).

Ser-112 serves as the catalytic Phosphoserine intermediate. Ser-112, Asp-251, Asp-253, and Asp-255 together coordinate Mg(2+). At Ser-112 the chain carries Phosphoserine.

Belongs to the phosphohexose mutase family. Mg(2+) is required as a cofactor. Post-translationally, activated by phosphorylation.

The enzyme catalyses alpha-D-glucosamine 1-phosphate = D-glucosamine 6-phosphate. Functionally, catalyzes the conversion of glucosamine-6-phosphate to glucosamine-1-phosphate. This is Phosphoglucosamine mutase from Bordetella pertussis (strain Tohama I / ATCC BAA-589 / NCTC 13251).